Reading from the N-terminus, the 397-residue chain is Mycinamicin IV hydroxylase/epoxidase (397 aa).

Positions 63-86 (RGPSMTRDEPRTRPEMVKGGLLSM) are disordered. Over residues 68 to 78 (TRDEPRTRPEM) the composition is skewed to basic and acidic residues. Glycine 81 is a binding site for substrate. Residues histidine 91, arginine 95, arginine 288, histidine 344, and cysteine 346 each contribute to the heme site.

Belongs to the cytochrome P450 family. Heme is required as a cofactor.

The protein operates within antibiotic biosynthesis; mycinamicin biosynthesis. In terms of biological role, involved in the biosynthesis of mycinamicin, a 16-membered macrolide antibiotic. Catalyzes consecutive hydroxylation (at C14) and epoxidation (at C12-C13) reactions with mycinamicin IV as initial substrate, leading to mycinamicin II. These reactions require prior dimethylation of 6-deoxyallose to mycinose for effective conversion by the dual function MycG enzyme. The sequence is that of Mycinamicin IV hydroxylase/epoxidase from Micromonospora griseorubida.